Here is a 125-residue protein sequence, read N- to C-terminus: MPTINQLVRHGRQTEVTKSKSPAMQGGPQRRGVCTRVYTTTPKKPNSALRKVAKVRLTNGFEVISYIGGEGHNLQEHSVVLVRGGRVKDLPGVRYHIVRGSLDLQGVKDRKQSRSKYGAKRPKKA.

A disordered region spans residues 1-31; that stretch reads MPTINQLVRHGRQTEVTKSKSPAMQGGPQRR. D89 bears the 3-methylthioaspartic acid mark. Residues 105 to 125 are disordered; sequence QGVKDRKQSRSKYGAKRPKKA. A compositionally biased stretch (basic residues) spans 113-125; sequence SRSKYGAKRPKKA.

Belongs to the universal ribosomal protein uS12 family. As to quaternary structure, part of the 30S ribosomal subunit. Contacts proteins S8 and S17. May interact with IF1 in the 30S initiation complex.

Functionally, with S4 and S5 plays an important role in translational accuracy. Its function is as follows. Interacts with and stabilizes bases of the 16S rRNA that are involved in tRNA selection in the A site and with the mRNA backbone. Located at the interface of the 30S and 50S subunits, it traverses the body of the 30S subunit contacting proteins on the other side and probably holding the rRNA structure together. The combined cluster of proteins S8, S12 and S17 appears to hold together the shoulder and platform of the 30S subunit. The sequence is that of Small ribosomal subunit protein uS12 from Methylibium petroleiphilum (strain ATCC BAA-1232 / LMG 22953 / PM1).